A 321-amino-acid chain; its full sequence is Sideroflexin-3 (321 aa).

N-acetylmethionine is present on Met-1. 4 helical membrane-spanning segments follow: residues 146-164 (LGTAYVSATTGAVATALGL), 174-194 (LVGRFVPFAAVAAANCINIPL), 225-245 (IFQVVISRIGMAIPAMAIPPV), and 266-286 (LQVGLVGFCLVFATPLCCALF).

The protein belongs to the sideroflexin family. Widely expressed.

The protein localises to the mitochondrion membrane. It catalyses the reaction L-serine(in) = L-serine(out). In terms of biological role, mitochondrial serine transporter that mediates transport of serine into mitochondria, an important step of the one-carbon metabolism pathway. Mitochondrial serine is converted to glycine and formate, which then exits to the cytosol where it is used to generate the charged folates that serve as one-carbon donors. The chain is Sideroflexin-3 from Mus musculus (Mouse).